The following is a 536-amino-acid chain: Phosphoenolpyruvate carboxykinase (ATP) (536 aa).

The substrate site is built by Arg61, Tyr195, and Lys201. Residues Lys201, His220, and 236–244 (GLSGTGKTT) each bind ATP. 2 residues coordinate Mn(2+): Lys201 and His220. Asp257 provides a ligand contact to Mn(2+). ATP contacts are provided by Glu285, Arg322, and Thr447. Position 322 (Arg322) interacts with substrate.

This sequence belongs to the phosphoenolpyruvate carboxykinase (ATP) family. Requires Mn(2+) as cofactor.

It localises to the cytoplasm. The enzyme catalyses oxaloacetate + ATP = phosphoenolpyruvate + ADP + CO2. It participates in carbohydrate biosynthesis; gluconeogenesis. Functionally, involved in the gluconeogenesis. Catalyzes the conversion of oxaloacetate (OAA) to phosphoenolpyruvate (PEP) through direct phosphoryl transfer between the nucleoside triphosphate and OAA. This chain is Phosphoenolpyruvate carboxykinase (ATP), found in Chelativorans sp. (strain BNC1).